The sequence spans 679 residues: Protein hook (679 aa).

Residues 1–155 (MSAPKNEMYY…NIMRALQELE (155 aa)) are interaction with microtubules. The Calponin-homology (CH) domain occupies 6–123 (NEMYYSLLEW…RLLQLVLGCA (118 aa)). Coiled coils occupy residues 135–437 (EIMC…LKCG) and 480–574 (QTAL…QEIL).

It belongs to the hook family. In terms of assembly, homodimer. Interacts with microtubules via its N-terminus.

It localises to the cytoplasm. The protein localises to the cytoskeleton. The protein resides in the endosome. Its subcellular location is the synapse. Involved in endocytic trafficking by stabilizing organelles of the endocytic pathway. Probably acts as a cytoskeletal linker protein required to tether endosome vesicles to the cytoskeleton. Involved in modulation of endocytosis at stages required for down-regulation of membrane proteins that control synapse size. Not involved in synaptic vesicle recycling. Required in R7 cells for boss endocytosis into multivesicular bodies (MVBs). Has a role in regulating adult longevity. The chain is Protein hook from Drosophila melanogaster (Fruit fly).